A 238-amino-acid chain; its full sequence is Keratin-associated protein 5-3 (238 aa).

A run of 11 repeats spans residues cysteine 35–proline 38, cysteine 41–proline 44, cysteine 47–proline 50, cysteine 91–proline 94, cysteine 150–proline 153, cysteine 160–proline 163, cysteine 170–proline 173, cysteine 189–proline 192, cysteine 199–proline 202, cysteine 218–proline 221, and cysteine 228–proline 231. The 11 X 4 AA repeats of C-C-X-P stretch occupies residues cysteine 35–proline 231.

It belongs to the KRTAP type 5 family. Interacts with hair keratins. As to expression, restricted to hair root, not detected in any other tissues.

In terms of biological role, in the hair cortex, hair keratin intermediate filaments are embedded in an interfilamentous matrix, consisting of hair keratin-associated protein (KRTAP), which are essential for the formation of a rigid and resistant hair shaft through their extensive disulfide bond cross-linking with abundant cysteine residues of hair keratins. The matrix proteins include the high-sulfur and high-glycine-tyrosine keratins. The sequence is that of Keratin-associated protein 5-3 (KRTAP5-3) from Homo sapiens (Human).